The chain runs to 301 residues: Elongation factor Ts (301 aa).

The involved in Mg(2+) ion dislocation from EF-Tu stretch occupies residues 82-85 (TDFV).

The protein belongs to the EF-Ts family.

It is found in the cytoplasm. Functionally, associates with the EF-Tu.GDP complex and induces the exchange of GDP to GTP. It remains bound to the aminoacyl-tRNA.EF-Tu.GTP complex up to the GTP hydrolysis stage on the ribosome. In Hyphomonas neptunium (strain ATCC 15444), this protein is Elongation factor Ts.